The following is a 226-amino-acid chain: Lipoprotein-releasing system ATP-binding protein LolD (226 aa).

The 222-residue stretch at 5-226 (LRCEKISKFY…MADGVLREAS (222 aa)) folds into the ABC transporter domain. Residue 41–48 (GSSGSGKS) coordinates ATP.

This sequence belongs to the ABC transporter superfamily. Lipoprotein translocase (TC 3.A.1.125) family. In terms of assembly, the complex is composed of two ATP-binding proteins (LolD) and two transmembrane proteins (LolC and LolE).

The protein resides in the cell inner membrane. Functionally, part of the ABC transporter complex LolCDE involved in the translocation of mature outer membrane-directed lipoproteins, from the inner membrane to the periplasmic chaperone, LolA. Responsible for the formation of the LolA-lipoprotein complex in an ATP-dependent manner. This chain is Lipoprotein-releasing system ATP-binding protein LolD, found in Haemophilus ducreyi (strain 35000HP / ATCC 700724).